Reading from the N-terminus, the 161-residue chain is Arachidonate 5-lipoxygenase-activating protein (161 aa).

Over 1 to 8 (MDQEAVGN) the chain is Lumenal. A helical transmembrane segment spans residues 9-30 (VVLLALVTLISVVQNAFFAHKV). The Cytoplasmic segment spans residues 31–52 (EHESKAHNGRSFQRTGTLAFER). The helical transmembrane segment at 53-77 (VYTANQNCVDAYPTFLVVLWTAGLL) threads the bilayer. Residues 78-80 (CSQ) lie on the Lumenal side of the membrane. A helical transmembrane segment spans residues 81–102 (VPAAFAGLMYLFVRQKYFVGYL). At 103 to 107 (GERTQ) the chain is on the cytoplasmic side. An intramembrane segment occupies 108 to 115 (STPGYIFG). Residues 116–128 (KRIILFLFLMSFA) traverse the membrane as a helical segment. Residues 129-161 (GILNHYLIFFFGSDFENYIRTVSTTISPLLLIP) lie on the Lumenal side of the membrane.

Belongs to the MAPEG family. As to quaternary structure, homotrimer. Interacts with LTC4S and ALOX5.

Its subcellular location is the nucleus membrane. The protein resides in the endoplasmic reticulum membrane. Its function is as follows. Required for leukotriene biosynthesis by ALOX5 (5-lipoxygenase). Anchors ALOX5 to the membrane. Binds arachidonic acid, and could play an essential role in the transfer of arachidonic acid to ALOX5. Binds to MK-886, a compound that blocks the biosynthesis of leukotrienes. This is Arachidonate 5-lipoxygenase-activating protein (Alox5ap) from Mus musculus (Mouse).